We begin with the raw amino-acid sequence, 520 residues long: MTETAHDRLLIIDFGSQVTQLIARRLRELNVYCEIHPYQNVTMDFVREFAPKAVIFSGGPDSVTREGSPRAPQEIFDYGVPILGICYGQQVMMHQLGGTVQSGHGTAEFGRAYVTPTEERIDMLSGWFLDQTEQVWMSHGDHVSEIAPGFKVYGTSPNAPFAITADLERNFYAVQFHPEVHHTPNGKTLYENFVRLAGFSGDWTMGAYREQMVETIREQVGDKKVICALSGGVDSSVAAALIHEAIGDQLTCVFVDHGLLRKNEAEEVVGMFRDHMNLQVIHADETELFLGELEGQSDPETKRKIIGKLFIDVFQKYADQIEGAEFLAQGTLYPDVIESVSFSGGPSVTIKSHHNVGGLPEKMGLKLVEPLRELFKDEVRALGRELGLPDSFIGRHPFPGPGLAIRCPGEITRDKLDILREADAIYIDQIRKHGLYDEIWQAFVAILPVRTVGVMGDGRTYDYACALRAVTSVDGMTADYYPFSHEFLGETATRIINEVKGINRCTYDITSKPPGTIEWE.

A Glutamine amidotransferase type-1 domain is found at 8-202 (RLLIIDFGSQ…FVRLAGFSGD (195 aa)). Cys86 functions as the Nucleophile in the catalytic mechanism. Active-site residues include His177 and Glu179. A GMPS ATP-PPase domain is found at 203 to 395 (WTMGAYREQM…LGLPDSFIGR (193 aa)). ATP is bound at residue 230 to 236 (SGGVDSS).

Homodimer.

The catalysed reaction is XMP + L-glutamine + ATP + H2O = GMP + L-glutamate + AMP + diphosphate + 2 H(+). Its pathway is purine metabolism; GMP biosynthesis; GMP from XMP (L-Gln route): step 1/1. Catalyzes the synthesis of GMP from XMP. The protein is GMP synthase [glutamine-hydrolyzing] of Ruegeria sp. (strain TM1040) (Silicibacter sp.).